A 179-amino-acid polypeptide reads, in one-letter code: MNETLKEELLQSIREVKDYPKKGILFKDITTLLNYPKLFNKLIDALKKRYLALNIDFIVGIEARGFILGSALAYALGVGFVPVRKKGKLPAHTLSQSYSLEYGSDSIEIHSDAFRGVKGVRVVLIDDLLATGGTALASLELIKALQAECIEACFLIGLKELPGIQLLEERVKTFCLLEC.

Belongs to the purine/pyrimidine phosphoribosyltransferase family. As to quaternary structure, homodimer.

It is found in the cytoplasm. The enzyme catalyses AMP + diphosphate = 5-phospho-alpha-D-ribose 1-diphosphate + adenine. The protein operates within purine metabolism; AMP biosynthesis via salvage pathway; AMP from adenine: step 1/1. Its function is as follows. Catalyzes a salvage reaction resulting in the formation of AMP, that is energically less costly than de novo synthesis. This is Adenine phosphoribosyltransferase from Helicobacter pylori (strain HPAG1).